A 41-amino-acid chain; its full sequence is uncharacterized protein (41 aa).

This is an uncharacterized protein from Rickettsia prowazekii (strain Madrid E).